A 567-amino-acid chain; its full sequence is Probable transport protein (567 aa).

The span at 1–30 (MSDRVEVNERRSDSVSEKEPARDDARKDVT) shows a compositional bias: basic and acidic residues. The disordered stretch occupies residues 1–38 (MSDRVEVNERRSDSVSEKEPARDDARKDVTDDQEDAPP). Residues 1 to 46 (MSDRVEVNERRSDSVSEKEPARDDARKDVTDDQEDAPPFMTANNAR) lie on the Cytoplasmic side of the membrane. A helical membrane pass occupies residues 47–67 (VMLVQAIGGSLNGYSIGFVGV). The Extracellular segment spans residues 68-160 (YSTLFGYSTN…PSGYSSSESG (93 aa)). Residues 161 to 181 (IFAGSMIAGCLIGSVFAGPLA) traverse the membrane as a helical segment. Topologically, residues 182–189 (SKIGARLS) are cytoplasmic. The helical transmembrane segment at 190-210 (FLLVGLVGVVASVMYHASCAA) threads the bilayer. The Extracellular portion of the chain corresponds to 211–212 (DE). Residues 213 to 233 (FWVLIVGRFVIGLFLGVICVA) form a helical membrane-spanning segment. Over 234 to 249 (CPVYTDQNAHPKWKRT) the chain is Cytoplasmic. A helical membrane pass occupies residues 250–270 (IGVMFQVFTTLGIFVAALMGL). The Extracellular portion of the chain corresponds to 271 to 289 (ALGQSIRFDHDGDQKVMAR). A helical membrane pass occupies residues 290–310 (MQGLCVFSTLFSLLTVVLGIV). Over 311-341 (TRESRAKFDGGEEGRAELNPSEYGYVEMIPR) the chain is Cytoplasmic. Residues 342 to 362 (LLMGCVMAGTLQLTGINAVMN) traverse the membrane as a helical segment. Residues 363–366 (YAPT) lie on the Extracellular side of the membrane. The helical transmembrane segment at 367–387 (IMGSLGLAPLVGNFVVMLWNF) threads the bilayer. At 388 to 404 (VTTLASIPLSYVFTMRH) the chain is on the cytoplasmic side. A helical transmembrane segment spans residues 405–425 (VFLFGSIFTSCMCLFMCGIPV). Residues 426 to 437 (YPGVSKKLEAKN) lie on the Extracellular side of the membrane. Residues 438–458 (GVAITGILLFILGFEVCVGPC) form a helical membrane-spanning segment. Residues 459 to 480 (YYVLTQDMFPPSFRPRGASFTQ) lie on the Cytoplasmic side of the membrane. Residues 481–501 (VAQFIFNLIINVCYPIATESI) form a helical membrane-spanning segment. The Extracellular portion of the chain corresponds to 502 to 514 (SGGPSGNQDKGQA). A helical membrane pass occupies residues 515–535 (VAFIFFGGLGLICFVIQVFFL). The Cytoplasmic portion of the chain corresponds to 536-567 (HPWDEERDGKKVVAPAIGKKELSEESIGNRAE).

The protein belongs to the major facilitator superfamily. Sugar transporter (TC 2.A.1.1) family.

It localises to the membrane. Probable membrane transport protein. This is Probable transport protein (PRO-1) from Leishmania enriettii.